Consider the following 567-residue polypeptide: Formate--tetrahydrofolate ligase (567 aa).

68–75 (TPLGEGKT) provides a ligand contact to ATP.

Belongs to the formate--tetrahydrofolate ligase family.

It carries out the reaction (6S)-5,6,7,8-tetrahydrofolate + formate + ATP = (6R)-10-formyltetrahydrofolate + ADP + phosphate. The protein operates within one-carbon metabolism; tetrahydrofolate interconversion. The chain is Formate--tetrahydrofolate ligase from Desulforamulus reducens (strain ATCC BAA-1160 / DSM 100696 / MI-1) (Desulfotomaculum reducens).